Here is a 924-residue protein sequence, read N- to C-terminus: Aminopeptidase 2 (924 aa).

A signal peptide spans 1-45 (MASNNTSQRSGFSSFFCRLKTYFCNHFLCLFVLSFFPLSFRRLCL). Residues 46-57 (LCHLCEKSNLWL) constitute a propeptide that is removed on maturation. Position 58 is an N-acetylserine; partial (serine 58). Asparagine 92 is a glycosylation site (N-linked (GlcNAc...) asparagine). Glutamate 194 contributes to the substrate binding site. N-linked (GlcNAc...) asparagine glycosylation is present at asparagine 229. Residue 327–331 (GAMEN) participates in substrate binding. Histidine 363 lines the Zn(2+) pocket. Glutamate 364 serves as the catalytic Proton acceptor. The Zn(2+) site is built by histidine 367 and glutamate 386.

Belongs to the peptidase M1 family. Zn(2+) is required as a cofactor.

It is found in the secreted. It localises to the cell wall. Inactivated by metal-chelating agents phenanthroline and EDTA. Inhibited by bestatin, an aminopeptidase inhibitor. Not inhibited by pepstatin A and PMSF, inhibitors of aspartic and the serine proteases, respectively. Not inhibited by carboxypeptidase inhibitor. Its function is as follows. Metalloprotease that specifically hydrolyzes peptides with N-terminal alanine, arginine and leucine residues. In Candida albicans (strain SC5314 / ATCC MYA-2876) (Yeast), this protein is Aminopeptidase 2 (APE2).